The chain runs to 234 residues: Elongation factor Tu (234 aa).

The 125-residue stretch at 1–125 (KNMITGAAQM…EVDAFIPTPE (125 aa)) folds into the tr-type G domain. 47–50 (NKQD) is a GTP binding site.

This sequence belongs to the TRAFAC class translation factor GTPase superfamily. Classic translation factor GTPase family. EF-Tu/EF-1A subfamily. Monomer.

It is found in the cytoplasm. The catalysed reaction is GTP + H2O = GDP + phosphate + H(+). In terms of biological role, GTP hydrolase that promotes the GTP-dependent binding of aminoacyl-tRNA to the A-site of ribosomes during protein biosynthesis. This is Elongation factor Tu (tufA) from Prochlorothrix hollandica.